Consider the following 620-residue polypeptide: 1-deoxy-D-xylulose-5-phosphate synthase (620 aa).

Thiamine diphosphate-binding positions include His-80 and 121–123; that span reads GHS. Residue Asp-152 participates in Mg(2+) binding. Thiamine diphosphate contacts are provided by residues 153–154, Asn-181, Tyr-288, and Glu-370; that span reads GA. Residue Asn-181 participates in Mg(2+) binding.

It belongs to the transketolase family. DXPS subfamily. Homodimer. It depends on Mg(2+) as a cofactor. Requires thiamine diphosphate as cofactor.

The catalysed reaction is D-glyceraldehyde 3-phosphate + pyruvate + H(+) = 1-deoxy-D-xylulose 5-phosphate + CO2. Its pathway is metabolic intermediate biosynthesis; 1-deoxy-D-xylulose 5-phosphate biosynthesis; 1-deoxy-D-xylulose 5-phosphate from D-glyceraldehyde 3-phosphate and pyruvate: step 1/1. Functionally, catalyzes the acyloin condensation reaction between C atoms 2 and 3 of pyruvate and glyceraldehyde 3-phosphate to yield 1-deoxy-D-xylulose-5-phosphate (DXP). This Salmonella paratyphi A (strain ATCC 9150 / SARB42) protein is 1-deoxy-D-xylulose-5-phosphate synthase.